Reading from the N-terminus, the 122-residue chain is Serum amyloid A-3 protein (122 aa).

The signal sequence occupies residues 1–18 (MKPFLAIIFCFLILGVDS). A disordered region spans residues 100 to 122 (ANKWGRSGKDPNHFRPAGLPSKY).

Belongs to the SAA family. In terms of tissue distribution, expressed by the liver; secreted in plasma.

Its subcellular location is the secreted. Major acute phase reactant. Apolipoprotein of the HDL complex. In vitro exhibits antimicrobial activity against Escherichia coli, Streptococcus uberis and Pseudomonas aeruginosa. In Mesocricetus auratus (Golden hamster), this protein is Serum amyloid A-3 protein (SAA3).